A 22-amino-acid chain; its full sequence is Thylakoid lumenal 11 kDa protein (22 aa).

Positions Phe-1–Phe-22 are disordered.

This sequence to A.thaliana At2g44920.

It localises to the plastid. The protein resides in the chloroplast thylakoid lumen. This chain is Thylakoid lumenal 11 kDa protein, found in Spinacia oleracea (Spinach).